A 32-amino-acid polypeptide reads, in one-letter code: Kappa-theraphotoxin-Gr2b (32 aa).

3 cysteine pairs are disulfide-bonded: Cys2-Cys16, Cys9-Cys21, and Cys15-Cys25.

The protein belongs to the neurotoxin 30 (phrixotoxin) family. As to expression, expressed by the venom gland.

It is found in the secreted. In terms of biological role, binds the voltage-sensor domain of the potassium channel KvAP (from the archaeon Aeropyrum pernix) and affects channel gating. In Grammostola rosea (Chilean rose tarantula), this protein is Kappa-theraphotoxin-Gr2b.